A 1560-amino-acid polypeptide reads, in one-letter code: Tenascin-N (1560 aa).

Positions 1 to 26 (MGLWGMLAFPLGFLLASVLLVASAPA) are cleaved as a signal peptide. EGF-like domains follow at residues 167-198 (DQPT…VDCA), 199-229 (YAAC…EDCS), and 230-260 (EQRC…PDCS). 9 disulfides stabilise this stretch: Cys-171–Cys-181, Cys-175–Cys-186, Cys-188–Cys-197, Cys-202–Cys-212, Cys-206–Cys-217, Cys-219–Cys-228, Cys-233–Cys-243, Cys-237–Cys-248, and Cys-250–Cys-259. Fibronectin type-III domains follow at residues 264-353 (APQG…DLAV), 354-444 (VGTA…TEID), 445-532 (GPTN…TEID), 533-622 (SPEN…IDSP), 623-706 (KNLV…APTD), 709-798 (GPKN…IDSP), 799-882 (KNLV…APTD), 885-970 (GPKN…APTD), 973-1062 (SPKN…IDSP), 1063-1144 (KNLV…TKAP), 1149-1238 (SPKN…IDPP), and 1239-1325 (RNLR…VDAR). Disordered regions lie at residues 868 to 888 (GTQE…GPKN) and 1044 to 1063 (GARE…DSPK). The span at 1044–1061 (GARESKKANTEGHTDIDS) shows a compositional bias: basic and acidic residues. Positions 1323 to 1540 (DARFPHPSDC…YVELKIRPFG (218 aa)) constitute a Fibrinogen C-terminal domain. Asn-1411 carries N-linked (GlcNAc...) asparagine glycosylation.

It belongs to the tenascin family. As to quaternary structure, homohexamer. As to expression, highest expression in kidney followed by spleen and brain. In brain, highest expression is found in hippocampus, cerebellum and olfactory bulb. Expressed in aortic valve, corneal limbus. Expressed in ribs periosteum. During a fracture repair process, expression increases in cells of newly formed perichondrium/peristeum surrounding the cartalaginous callus.

The protein localises to the secreted. The protein resides in the extracellular space. It is found in the extracellular matrix. Its function is as follows. Extracellular matrix protein that seems to be a ligand for ITGA8:ITGB1, ITGAV:ITGB1 and ITGA4:ITGB1. Involved in neurite outgrowth and cell migration in hippocampal explants. During endochondral bone formation, inhibits proliferation and differentiation of proteoblasts mediated by canonical WNT signaling. In tumors, stimulates angiogenesis by elongation, migration and sprouting of endothelial cells. Expressed in most mammary tumors, may facilitate tumorigenesis by supporting the migratory behavior of breast cancer cells. This Mus musculus (Mouse) protein is Tenascin-N.